Consider the following 208-residue polypeptide: Large ribosomal subunit protein uL3 (208 aa).

Position 149 is an N5-methylglutamine (Gln149).

It belongs to the universal ribosomal protein uL3 family. In terms of assembly, part of the 50S ribosomal subunit. Forms a cluster with proteins L14 and L19. Methylated by PrmB.

Functionally, one of the primary rRNA binding proteins, it binds directly near the 3'-end of the 23S rRNA, where it nucleates assembly of the 50S subunit. This Haemophilus influenzae (strain PittGG) protein is Large ribosomal subunit protein uL3.